A 68-amino-acid chain; its full sequence is Large ribosomal subunit protein uL30 (68 aa).

It belongs to the universal ribosomal protein uL30 family. Part of the 50S ribosomal subunit.

This chain is Large ribosomal subunit protein uL30, found in Kocuria rhizophila (strain ATCC 9341 / DSM 348 / NBRC 103217 / DC2201).